Here is a 1040-residue protein sequence, read N- to C-terminus: Multidrug resistance protein MdtB (1040 aa).

A run of 12 helical transmembrane segments spans residues 25-45 (LLMA…PVAA), 347-367 (LMLA…NIPA), 369-389 (IIPG…MVFL), 396-416 (LTLM…IVVI), 440-460 (IGFT…PLLF), 472-492 (FAVT…TLTP), 537-557 (WLTL…WIVI), 863-883 (LGST…VLGV), 888-908 (FIHP…ALLA), 910-930 (IIAG…LIGI), 968-988 (ILMT…STGV), and 998-1018 (IAMV…TPVI).

The protein belongs to the resistance-nodulation-cell division (RND) (TC 2.A.6) family. MdtB subfamily. In terms of assembly, part of a tripartite efflux system composed of MdtA, MdtB and MdtC. MdtB forms a heteromultimer with MdtC.

It is found in the cell inner membrane. This is Multidrug resistance protein MdtB from Salmonella newport (strain SL254).